The following is an 833-amino-acid chain: DNA gyrase subunit A (833 aa).

The 464-residue stretch at 35–498 (LPDVRDGMKP…SEDMFEDEDL (464 aa)) folds into the Topo IIA-type catalytic domain. Tyr123 acts as the O-(5'-phospho-DNA)-tyrosine intermediate in catalysis. The short motif at 525–531 (QKRGGRG) is the GyrA-box element. The interval 803–833 (RVDIEDDELDEDESIEEERDDRSEVEQGENE) is disordered. The span at 806–821 (IEDDELDEDESIEEER) shows a compositional bias: acidic residues.

Belongs to the type II topoisomerase GyrA/ParC subunit family. As to quaternary structure, heterotetramer, composed of two GyrA and two GyrB chains. In the heterotetramer, GyrA contains the active site tyrosine that forms a transient covalent intermediate with DNA, while GyrB binds cofactors and catalyzes ATP hydrolysis.

Its subcellular location is the cytoplasm. The enzyme catalyses ATP-dependent breakage, passage and rejoining of double-stranded DNA.. Functionally, a type II topoisomerase that negatively supercoils closed circular double-stranded (ds) DNA in an ATP-dependent manner to modulate DNA topology and maintain chromosomes in an underwound state. Negative supercoiling favors strand separation, and DNA replication, transcription, recombination and repair, all of which involve strand separation. Also able to catalyze the interconversion of other topological isomers of dsDNA rings, including catenanes and knotted rings. Type II topoisomerases break and join 2 DNA strands simultaneously in an ATP-dependent manner. The sequence is that of DNA gyrase subunit A from Halalkalibacterium halodurans (strain ATCC BAA-125 / DSM 18197 / FERM 7344 / JCM 9153 / C-125) (Bacillus halodurans).